A 271-amino-acid chain; its full sequence is Small ribosomal subunit protein uS2 (271 aa).

Over residues 229–242 (KERKGKDAEEELKK) the composition is skewed to basic and acidic residues. The interval 229 to 271 (KERKGKDAEEELKKAAAPKAAPAAEAAPAAEAPAAPVVEAAAE) is disordered. The segment covering 243-271 (AAAPKAAPAAEAAPAAEAPAAPVVEAAAE) has biased composition (low complexity).

The protein belongs to the universal ribosomal protein uS2 family.

In Nitratidesulfovibrio vulgaris (strain DSM 19637 / Miyazaki F) (Desulfovibrio vulgaris), this protein is Small ribosomal subunit protein uS2.